Here is a 174-residue protein sequence, read N- to C-terminus: tRNA (cytidine(56)-2'-O)-methyltransferase (174 aa).

S-adenosyl-L-methionine-binding positions include Leu83, 108–112, and 126–133; these read GAEKV and VGNQPHSE.

This sequence belongs to the aTrm56 family. As to quaternary structure, homodimer.

It localises to the cytoplasm. The enzyme catalyses cytidine(56) in tRNA + S-adenosyl-L-methionine = 2'-O-methylcytidine(56) in tRNA + S-adenosyl-L-homocysteine + H(+). In terms of biological role, specifically catalyzes the AdoMet-dependent 2'-O-ribose methylation of cytidine at position 56 in tRNAs. This Methanothrix thermoacetophila (strain DSM 6194 / JCM 14653 / NBRC 101360 / PT) (Methanosaeta thermophila) protein is tRNA (cytidine(56)-2'-O)-methyltransferase.